Reading from the N-terminus, the 157-residue chain is Lectin (157 aa).

A disulfide bridge links Cys37 with Cys54.

Homodimer. Detected in fruits (at protein level).

It is found in the secreted. Binds with high affinity specifically to chito-oligosaccharides. May play a role in plant defense against pathogens by directly binding with the chitin cell wall. Forms filamentous structures at higher concentrations and may promote wound healing by forming filaments with phloem proteins like PP1. The protein is Lectin of Coccinia grandis (Ivy gourd).